The primary structure comprises 142 residues: Large ribosomal subunit protein uL23 (142 aa).

This sequence belongs to the universal ribosomal protein uL23 family. Component of the large ribosomal subunit. Mature ribosomes consist of a small (40S) and a large (60S) subunit. The 40S subunit contains about 32 different proteins and 1 molecule of RNA (18S). The 60S subunit contains 45 different proteins and 3 molecules of RNA (25S, 5.8S and 5S).

It localises to the cytoplasm. In terms of biological role, component of the ribosome, a large ribonucleoprotein complex responsible for the synthesis of proteins in the cell. The small ribosomal subunit (SSU) binds messenger RNAs (mRNAs) and translates the encoded message by selecting cognate aminoacyl-transfer RNA (tRNA) molecules. The large subunit (LSU) contains the ribosomal catalytic site termed the peptidyl transferase center (PTC), which catalyzes the formation of peptide bonds, thereby polymerizing the amino acids delivered by tRNAs into a polypeptide chain. The nascent polypeptides leave the ribosome through a tunnel in the LSU and interact with protein factors that function in enzymatic processing, targeting, and the membrane insertion of nascent chains at the exit of the ribosomal tunnel. RPL25 is a major component of the universal docking site for these factors at the polypeptide exit tunnel. The polypeptide is Large ribosomal subunit protein uL23 (Candida albicans (strain SC5314 / ATCC MYA-2876) (Yeast)).